The primary structure comprises 160 residues: Iron-sulfur assembly protein IscA1 (160 aa).

This sequence belongs to the HesB/IscA family. Tetramer.

The protein resides in the mitochondrion. It functions in the pathway cofactor biosynthesis; iron-sulfur cluster biosynthesis. Its function is as follows. Participates in iron-sulfur cluster formation (ISC) pathway for iron-sulfur (Fe-S) cluster biogenesis. Can bind iron and [4Fe-4S] clusters. May function as an iron chaperone. The protein is Iron-sulfur assembly protein IscA1 of Plasmodium falciparum (isolate 3D7).